The chain runs to 695 residues: Elongation factor G 1 (695 aa).

Positions 6-281 (TRYRNIGIFA…AVVDYLPNPK (276 aa)) constitute a tr-type G domain. GTP-binding positions include 15-22 (AHVDAGKT), 79-83 (DTPGH), and 133-136 (NKLD).

This sequence belongs to the TRAFAC class translation factor GTPase superfamily. Classic translation factor GTPase family. EF-G/EF-2 subfamily.

The protein localises to the cytoplasm. Its function is as follows. Catalyzes the GTP-dependent ribosomal translocation step during translation elongation. During this step, the ribosome changes from the pre-translocational (PRE) to the post-translocational (POST) state as the newly formed A-site-bound peptidyl-tRNA and P-site-bound deacylated tRNA move to the P and E sites, respectively. Catalyzes the coordinated movement of the two tRNA molecules, the mRNA and conformational changes in the ribosome. In Synechocystis sp. (strain ATCC 27184 / PCC 6803 / Kazusa), this protein is Elongation factor G 1 (fusA).